The sequence spans 333 residues: MTGNSFNSMKDFLKQTGGYAVIDGGLATEFERHGADLNDPLWSAKCLVTSPHLIHTVHLDYLEAGADIISSASYQATIQGFEAKGFSREESESLLKKSVEIATEARNSYYDKCGTSSSMDDKILKKRPILVAASVGSYGAYLADGSEYSGIYGDSITLEKLKDFHRRRLQVLAESGADLIAFETIPNKIEAQAFADLLEEGDVKIPGWFSFNSKDGVNVVSGDSIKECISIAENCEKVVAVGINCTPPRFIEGLVLEIEKVTSKPILVYPNSGESYDADRKEWVENTGVGDEDFVSYVEKWMDAGVSLLGGCCRTTPTTIRAIHKRLVNRRSL.

The Hcy-binding domain occupies Ser8 to Leu327. Cys245, Cys312, and Cys313 together coordinate Zn(2+).

Monomer. The cofactor is Zn(2+). In terms of tissue distribution, expressed predominantly in roots. Expressed in rosette leaves, cauline leaves and developing seeds.

The catalysed reaction is S-methyl-L-methionine + L-homocysteine = 2 L-methionine + H(+). Catalyzes methyl transfer from S-methylmethionine (SMM) to adenosyl-L-homocysteine (AdoMet). SMM degradation (by HMT-1, HMT-2 and HMT-3) and biosynthesis (by MMT1) constitute the SMM cycle in plants, which is probably required to achieve short term control of AdoMet level. The chain is Homocysteine S-methyltransferase 2 (HMT-2) from Arabidopsis thaliana (Mouse-ear cress).